We begin with the raw amino-acid sequence, 166 residues long: Cofilin-1 (166 aa).

Position 2 is an N-acetylalanine (A2). Phosphoserine occurs at positions 3 and 8. In terms of domain architecture, ADF-H spans 4 to 153; it reads GVAVSDGVIK…KDRCTLAEKL (150 aa). An N6-acetyllysine modification is found at K13. Phosphothreonine is present on T25. Residues 30 to 34 carry the Nuclear localization signal motif; sequence KKRKK. Residue S41 is modified to Phosphoserine. Position 68 is a phosphotyrosine (Y68). At K73 the chain carries N6-acetyllysine. Residue K132 forms a Glycyl lysine isopeptide (Lys-Gly) (interchain with G-Cter in SUMO2) linkage. The residue at position 140 (Y140) is a Phosphotyrosine. Position 144 is an N6-acetyllysine (K144). At S156 the chain carries Phosphoserine.

This sequence belongs to the actin-binding proteins ADF family. Can bind G- and F-actin in a 1:1 ratio of cofilin to actin. It is a major component of intranuclear and cytoplasmic actin rods. Interacts with the subcortical maternal complex (SCMC) via interaction with TLE6 and NLRP5. Interacts with C9orf72. Post-translationally, inactivated by phosphorylation on Ser-3. Phosphorylated on Ser-3 in resting cells. Dephosphorylated by PDXP/chronophin; this restores its activity in promoting actin filament depolymerization. The phosphorylation of Ser-24 may prevent recognition of the nuclear localization signal. Phosphorylated via a ARRB1-RAC1-LIMK1-PAK1 cascade upon active ligand stimulation of atypical chemokine receptor ACKR2.

Its subcellular location is the nucleus matrix. It localises to the cytoplasm. The protein resides in the cytoskeleton. The protein localises to the cell projection. It is found in the ruffle membrane. Its subcellular location is the lamellipodium membrane. It localises to the lamellipodium. The protein resides in the growth cone. The protein localises to the axon. Binds to F-actin and exhibits pH-sensitive F-actin depolymerizing activity. Important for normal progress through mitosis and normal cytokinesis. In conjunction with the subcortical maternal complex (SCMC), plays an essential role for zygotes to progress beyond the first embryonic cell divisions via regulation of actin dynamics. Required for the centralization of the mitotic spindle and symmetric division of zygotes. Plays a role in the regulation of cell morphology and cytoskeletal organization in epithelial cells. Required for the up-regulation of atypical chemokine receptor ACKR2 from endosomal compartment to cell membrane, increasing its efficiency in chemokine uptake and degradation. Required for neural tube morphogenesis and neural crest cell migration. The protein is Cofilin-1 (CFL1) of Bos taurus (Bovine).